Consider the following 201-residue polypeptide: NAD(P)H dehydrogenase (quinone) (201 aa).

The Flavodoxin-like domain maps to 7–192 (ILVLYYSMYG…SIARYQGEYV (186 aa)). FMN contacts are provided by residues 13–18 (SMYGHI) and 81–83 (TRF). Y15 is an NAD(+) binding site. A substrate-binding site is contributed by W101. Residues 116-121 (STGTGG) and H136 each bind FMN.

This sequence belongs to the WrbA family. Requires FMN as cofactor.

The enzyme catalyses a quinone + NADH + H(+) = a quinol + NAD(+). It carries out the reaction a quinone + NADPH + H(+) = a quinol + NADP(+). This Shigella sonnei (strain Ss046) protein is NAD(P)H dehydrogenase (quinone).